The following is a 1126-amino-acid chain: Protein translocase subunit SecA (1126 aa).

ATP is bound by residues Gln175, 193–197 (GEGKT), and Asp694. A disordered region spans residues 1060–1126 (VQEAAPEKHE…KYKNCHGQGL (67 aa)). The span at 1064 to 1080 (APEKHEDMSRYRTEKTD) shows a compositional bias: basic and acidic residues. Residues Cys1110, Cys1112, Cys1121, and His1122 each coordinate Zn(2+).

Belongs to the SecA family. In terms of assembly, monomer and homodimer. Part of the essential Sec protein translocation apparatus which comprises SecA, SecYEG and auxiliary proteins SecDF. Other proteins may also be involved. Zn(2+) is required as a cofactor.

The protein resides in the cell inner membrane. Its subcellular location is the cytoplasm. The catalysed reaction is ATP + H2O + cellular proteinSide 1 = ADP + phosphate + cellular proteinSide 2.. Functionally, part of the Sec protein translocase complex. Interacts with the SecYEG preprotein conducting channel. Has a central role in coupling the hydrolysis of ATP to the transfer of proteins into and across the cell membrane, serving as an ATP-driven molecular motor driving the stepwise translocation of polypeptide chains across the membrane. The protein is Protein translocase subunit SecA of Parabacteroides distasonis (strain ATCC 8503 / DSM 20701 / CIP 104284 / JCM 5825 / NCTC 11152).